The sequence spans 560 residues: MTTTATQHFAQLLQKYGIDTVFGIVGIPIVQLADTMVANGIKFIPCRNEQAASYAASAYGYISDKPGVLLIVGGPGLIHALAGIYNSMSNRWPLLVIAGSSSQSDIHKGGFQELDQVSLLSPFLKFTGKLTPDNIDMITQKALNYCIQGTAGVSYIDVPADFIEYEKPLEGNDRTGNELPMILTPNICGPDPSKIKKVVQLILQHKNKNILIVIGKGAVKNSHEIRRLVNTFNLPFLPTPMAKGIVPDSSPLNVSSARSQALKIADIVLVLGARLNWILHFGTSPKWNSESIFIQFDSNPETLGDNNVSPGADLSIWGDIGLSVTALVEELTRQDSCWKYSGVKQEIREKIQLNQTRLLRKEKTRGAQLNYNQVYGTLRPLIDDYRTILVTEGANTMDIARISFPTDAPRRRLDAGTNATMGIGLGYALACKASHPELDVVLIQGDSAFGFSAMEIETAVRCQLALVIVVMNNSGIYHGEKDIEGDLPPTALSKNCRYDLVGKGLGANDFFVNTISELSRCFQQAVQLSRTKRETSVINVIIEPGEQKQIAFAWQNKPRL.

A thiamine diphosphate-binding site is contributed by Glu-49. The Mg(2+) site is built by Asp-446 and Asn-473. Positions 558 to 560 (PRL) match the Peroxisomal target signal 1 (PTS1) motif.

Belongs to the TPP enzyme family. Mg(2+) serves as cofactor. Thiamine diphosphate is required as a cofactor.

The protein resides in the cytoplasm. The protein localises to the peroxisome matrix. It carries out the reaction an (R)-2-hydroxy-long-chain-fatty acyl-CoA = a long-chain fatty aldehyde + formyl-CoA. The catalysed reaction is a 2-hydroxy-3-methyl fatty acyl-CoA = a 2-methyl-branched fatty aldehyde + formyl-CoA. Its function is as follows. Catalyzes a carbon-carbon cleavage reaction; cleaves a 2-hydroxy-3-methylacyl-CoA into formyl-CoA and a 2-methyl-branched fatty aldehyde. The protein is 2-hydroxyacyl-CoA lyase of Saccharomyces cerevisiae (strain ATCC 204508 / S288c) (Baker's yeast).